A 383-amino-acid polypeptide reads, in one-letter code: tRNA-specific 2-thiouridylase MnmA (383 aa).

ATP-binding positions include 30–37 (GMSGGVDS) and methionine 56. The interaction with target base in tRNA stretch occupies residues 116 to 118 (NPD). Residue cysteine 121 is the Nucleophile of the active site. Cysteine 121 and cysteine 218 are joined by a disulfide. ATP is bound at residue glycine 146. Positions 168–170 (KDQ) are interaction with tRNA. The Cysteine persulfide intermediate role is filled by cysteine 218. The tract at residues 330 to 331 (RY) is interaction with tRNA.

Belongs to the MnmA/TRMU family.

The protein localises to the cytoplasm. It catalyses the reaction S-sulfanyl-L-cysteinyl-[protein] + uridine(34) in tRNA + AH2 + ATP = 2-thiouridine(34) in tRNA + L-cysteinyl-[protein] + A + AMP + diphosphate + H(+). Catalyzes the 2-thiolation of uridine at the wobble position (U34) of tRNA, leading to the formation of s(2)U34. The sequence is that of tRNA-specific 2-thiouridylase MnmA from Haemophilus influenzae (strain ATCC 51907 / DSM 11121 / KW20 / Rd).